The primary structure comprises 239 residues: Sugar fermentation stimulation protein homolog (239 aa).

This sequence belongs to the SfsA family.

The protein is Sugar fermentation stimulation protein homolog of Shewanella woodyi (strain ATCC 51908 / MS32).